Here is a 227-residue protein sequence, read N- to C-terminus: Germin-like protein subfamily T member 3 (227 aa).

An N-terminal signal peptide occupies residues 1 to 26; that stretch reads MAHISQISSFLSIVLIFLALCITLFT. C44 and C59 are joined by a disulfide. One can recognise a Cupin type-1 domain in the interval 71 to 219; that stretch reads SGLNTPLNTS…AFKADSKTIN (149 aa). N78 carries N-linked (GlcNAc...) asparagine glycosylation. Mn(2+)-binding residues include H119, H121, and E126. An N-linked (GlcNAc...) asparagine glycan is attached at N143. Position 165 (H165) interacts with Mn(2+).

Belongs to the germin family. In terms of assembly, oligomer (believed to be a pentamer but probably hexamer).

Its subcellular location is the secreted. It localises to the extracellular space. It is found in the apoplast. In terms of biological role, may play a role in plant defense. Probably has no oxalate oxidase activity even if the active site is conserved. In Arabidopsis thaliana (Mouse-ear cress), this protein is Germin-like protein subfamily T member 3.